We begin with the raw amino-acid sequence, 679 residues long: WD repeat-containing protein 48 homolog (679 aa).

8 WD repeats span residues 26–65, 71–110, 113–152, 164–203, 206–245, 248–287, 290–329, and 349–388; these read QHRN…NEKY, HHND…CMST, THRD…ALTA, GSKD…RSMK, GHTE…CIQT, VHKE…NKML, EEKA…RCVL, and KGGA…KKEE. The segment at 594–615 is disordered; the sequence is PSAGNANNSLQNSQSDANSEGS.

This sequence belongs to the WD repeat WDR48 family. In terms of assembly, catalytic component of the Usp12-46 deubiquitylase complex consisting of Usp12-46, Wdr20 and Uaf1; regulatory subunit that, together wtih Wdr20, stabilizes Usp12-46. The Usp12-46 deubiquitylase complex associates with arr/arrow; the interaction leads to deubiquitination and stabilization of arr/arrow.

In terms of biological role, regulatory component of the Usp12-46 deubiquitylase complex. activates deubiquitination by increasing the catalytic turnover without increasing the affinity of deubiquitinating enzymes for the substrate. The complex deubiquitylates the wg/wingless-signaling receptor arr/arrow, which stabilizes the receptor and increases its concentration at the cell surface; this enhances the sensitivity of cells to wg/wingless-signal stimulation. This increases the amplitude and spatial range of the signaling response to the wg/wingless morphogen gradient, facilitating the precise concentration-dependent regulation of its target genes. Together with Wdr20 and Usp12-46 required for wg/wingless-mediated signaling in the wing imaginal disc and for wg/wingless-dependent regulation of intestinal stem cell proliferation. The sequence is that of WD repeat-containing protein 48 homolog from Drosophila mojavensis (Fruit fly).